The sequence spans 192 residues: Ion-translocating oxidoreductase complex subunit B (192 aa).

A hydrophobic region spans residues 1–26 (MNAFWIAVAAVSLLGLAFGAILGYAS). The 60-residue stretch at 32–91 (EDDPVVEKIDEILPQSQCGQCGYPGCRPYAEAISCNGEKINRCAPGGEAVMLKIAELLNV) folds into the 4Fe-4S domain. [4Fe-4S] cluster contacts are provided by Cys-49, Cys-52, Cys-57, Cys-74, Cys-117, Cys-120, Cys-123, Cys-127, Cys-147, Cys-150, Cys-153, and Cys-157. 2 4Fe-4S ferredoxin-type domains span residues 108-137 (MVAVIDENNCIGCTKCIQACPVDAIVGATR) and 138-167 (AMHTVMSDLCTGCNLCVDPCPTHCISLQPV).

This sequence belongs to the 4Fe4S bacterial-type ferredoxin family. RnfB subfamily. The complex is composed of six subunits: RsxA, RsxB, RsxC, RsxD, RsxE and RsxG. [4Fe-4S] cluster is required as a cofactor.

Its subcellular location is the cell inner membrane. Part of a membrane-bound complex that couples electron transfer with translocation of ions across the membrane. Required to maintain the reduced state of SoxR. The protein is Ion-translocating oxidoreductase complex subunit B of Escherichia coli O6:H1 (strain CFT073 / ATCC 700928 / UPEC).